A 522-amino-acid chain; its full sequence is 3'3'-cGAMP-specific phosphodiesterase 2 (522 aa).

Residues 36-160 (CVLLVDDDEQ…QKLRTLLYSM (125 aa)) enclose the Response regulatory domain. Position 91 is a 4-aspartylphosphate (D91). Residues 325 to 522 (LRETSKELVY…FIAIRASLPD (198 aa)) form the HD-GYP domain. A divalent metal cation-binding residues include H382 and D383. The Proton donor role is filled by K386. A divalent metal cation contacts are provided by H411, H437, H438, and D466.

In terms of assembly, homodimer. It depends on Mn(2+) as a cofactor.

It catalyses the reaction 3',3'-cGAMP + H2O = 5'-pApG-3' + H(+). Its function is as follows. Phosphodiesterase (PDE) that catalyzes the hydrolysis of 3'3'-cyclic GMP-AMP (3'3'-cGAMP), leading to linear 5'-pApG. Counteracts the function of the 3'3'-cGAMP synthase DncV, and is involved in the modulation of intracellular 3'3'-cGAMP levels. Enhances bacterial chemotaxis and inhibits intestinal colonization in vivo. Thus exerts a crucial role in regulating bacterial infectivity through catalyzing 3'3'-cGAMP degradation. Is specific for 3'3'-cGAMP since it cannot degrade other cGAMP linkage isomers (3'2'-, 2'3'-, and 2'2'-cGAMPs). Is also able to hydrolyze c-di-GMP but not c-di-AMP. This is 3'3'-cGAMP-specific phosphodiesterase 2 from Vibrio cholerae serotype O1 (strain ATCC 39315 / El Tor Inaba N16961).